We begin with the raw amino-acid sequence, 250 residues long: F-box only protein 17 (250 aa).

In terms of domain architecture, F-box spans 15–62 (HMALAELPPELLLQVLSHVPPRALVTRCRPVCRAWRDLVDGPSVWLLQ). An FBA domain is found at 99–250 (FCLLAPLGRN…GLLQGLSRLH (152 aa)).

Part of a SCF (SKP1-cullin-F-box) protein ligase complex. Interacts with SKP1 and CUL1.

Substrate-recognition component of the SCF (SKP1-CUL1-F-box protein)-type E3 ubiquitin ligase complex. Able to recognize and bind denatured glycoproteins, which are modified with complex-type oligosaccharides. Also recognizes sulfated glycans. Does not bind high-mannose glycoproteins. In Rattus norvegicus (Rat), this protein is F-box only protein 17 (Fbxo17).